The chain runs to 381 residues: MPTHLRFRRRSFLGLLFLFSLSTSALYFIYSAPGIVNEYLFMVQARGIQIRENVRNMGAQVLEQVVRSAYSINGTDYTYEFNFSETDASPTPFLPEGFTYKPEQVCPEKLPSMKGRLKVNMSEIALDEVEKLLKLNDPGLSVGGHWKPHDCRPRWKVAILVPFRNRHEHLPILFRHLIPALQRQRLQFGFYVIEQAGNEPFNRAMLFNVGFKEAMKDLNWDCVIFHDVDHILENDRNYYGCGEMPRHFAVKLNKYSYMLPYEEFFGGVSGLTVKQFKRINGFPNAFWGWGGEDDDLWNRVQFAGYKVSRPHGELGRYMSIPHHHRGEVQFLGRYKLLRRSKERQSLDGLNNLNYSPLVSRRSLYTNVSVTLSRDLAPVADY.

The Cytoplasmic segment spans residues 1–11 (MPTHLRFRRRS). A helical; Signal-anchor for type II membrane protein transmembrane segment spans residues 12–32 (FLGLLFLFSLSTSALYFIYSA). Topologically, residues 33 to 381 (PGIVNEYLFM…SRDLAPVADY (349 aa)) are lumenal. N-linked (GlcNAc...) asparagine glycosylation is found at N73, N82, and N120. C106 and C151 are oxidised to a cystine. UDP-alpha-D-galactose is bound by residues 162-166 (PFRNR), 201-203 (FNR), 228-229 (VD), Y257, and W289. A disulfide bridge links C222 with C241. D229 provides a ligand contact to Mn(2+). 291 to 294 (GEDD) serves as a coordination point for N-acetyl-D-glucosamine. H322 is a Mn(2+) binding site. 322-323 (HH) contributes to the UDP-alpha-D-galactose binding site. Residue R333 participates in N-acetyl-D-glucosamine binding. N-linked (GlcNAc...) asparagine glycosylation is present at N366.

The protein belongs to the glycosyltransferase 7 family. Mn(2+) serves as cofactor.

Its subcellular location is the golgi apparatus. The protein resides in the golgi stack membrane. The catalysed reaction is a beta-D-glucosyl-(1&lt;-&gt;1')-N-acylsphing-4-enine + UDP-alpha-D-galactose = a beta-D-Gal-(1-&gt;4)-beta-D-Glc-(1&lt;-&gt;1)-Cer(d18:1(4E)) + UDP + H(+). The protein operates within protein modification; protein glycosylation. It participates in sphingolipid metabolism. Functionally, catalyzes the synthesis of lactosylceramide (LacCer) via the transfer of galactose from UDP-galactose to glucosylceramide (GlcCer). Required for proper patterning of the dorsoventral axis during embryogenesis through the regulation of BMP signaling. Plays a role in proteoglycan glycosylation that is required for BMP-dependent specification of the dorsoventral axis. This Danio rerio (Zebrafish) protein is Beta-1,4-galactosyltransferase 5 (b4galt5).